We begin with the raw amino-acid sequence, 132 residues long: ATP synthase epsilon chain (132 aa).

It belongs to the ATPase epsilon chain family. As to quaternary structure, F-type ATPases have 2 components, CF(1) - the catalytic core - and CF(0) - the membrane proton channel. CF(1) has five subunits: alpha(3), beta(3), gamma(1), delta(1), epsilon(1). CF(0) has three main subunits: a, b and c.

It localises to the cell membrane. Its function is as follows. Produces ATP from ADP in the presence of a proton gradient across the membrane. This Bacillus caldotenax protein is ATP synthase epsilon chain (atpC).